A 290-amino-acid chain; its full sequence is Light-independent protochlorophyllide reductase iron-sulfur ATP-binding protein (290 aa).

ATP contacts are provided by residues 10–15 and Lys-39; that span reads GIGKST. Position 14 (Ser-14) interacts with Mg(2+). [4Fe-4S] cluster contacts are provided by Cys-95 and Cys-129. 180–181 is an ATP binding site; it reads NR.

It belongs to the NifH/BchL/ChlL family. As to quaternary structure, homodimer. Protochlorophyllide reductase is composed of three subunits; ChlL, ChlN and ChlB. [4Fe-4S] cluster serves as cofactor.

It localises to the plastid. The protein resides in the chloroplast. It carries out the reaction chlorophyllide a + oxidized 2[4Fe-4S]-[ferredoxin] + 2 ADP + 2 phosphate = protochlorophyllide a + reduced 2[4Fe-4S]-[ferredoxin] + 2 ATP + 2 H2O. It functions in the pathway porphyrin-containing compound metabolism; chlorophyll biosynthesis (light-independent). In terms of biological role, component of the dark-operative protochlorophyllide reductase (DPOR) that uses Mg-ATP and reduced ferredoxin to reduce ring D of protochlorophyllide (Pchlide) to form chlorophyllide a (Chlide). This reaction is light-independent. The L component serves as a unique electron donor to the NB-component of the complex, and binds Mg-ATP. This Pyropia yezoensis (Susabi-nori) protein is Light-independent protochlorophyllide reductase iron-sulfur ATP-binding protein.